The following is a 224-amino-acid chain: Attacin-A (224 aa).

Residues methionine 1–alanine 20 form the signal peptide. Residues leucine 21–arginine 34 constitute a propeptide that is removed on maturation.

It belongs to the attacin/sarcotoxin-2 family. As to expression, hemolymph (at protein level).

The protein localises to the secreted. In terms of biological role, hemolymph antibacterial protein. This chain is Attacin-A (AttA), found in Drosophila melanogaster (Fruit fly).